A 196-amino-acid polypeptide reads, in one-letter code: Large ribosomal subunit protein bL9 (196 aa).

This sequence belongs to the bacterial ribosomal protein bL9 family.

Binds to the 23S rRNA. The polypeptide is Large ribosomal subunit protein bL9 (Bradyrhizobium sp. (strain ORS 278)).